A 332-amino-acid polypeptide reads, in one-letter code: tRNA (cytosine(38)-C(5))-methyltransferase (332 aa).

An SAM-dependent MTase C5-type domain is found at 3 to 332 (HKILELYSGI…ISELLKILFE (330 aa)). S-adenosyl-L-homocysteine-binding positions include 12-14 (IGG), 33-34 (DI), 55-56 (NI), and S75. C78 is an active-site residue. Residues Q79, S97, and 316-317 (NS) each bind S-adenosyl-L-homocysteine.

The protein belongs to the class I-like SAM-binding methyltransferase superfamily. C5-methyltransferase family.

Its subcellular location is the cytoplasm. It localises to the nucleus. It carries out the reaction cytidine(38) in tRNA + S-adenosyl-L-methionine = 5-methylcytidine(38) in tRNA + S-adenosyl-L-homocysteine + H(+). The catalysed reaction is a 2'-deoxycytidine in DNA + S-adenosyl-L-methionine = a 5-methyl-2'-deoxycytidine in DNA + S-adenosyl-L-homocysteine + H(+). Its function is as follows. Specifically methylates cytosine 38 in the anticodon loop of tRNA(Asp). Also has DNA (cytosine-5)-methyltransferase activity. Shows affinity for both tRNA(Asp) and DNA substrates. The chain is tRNA (cytosine(38)-C(5))-methyltransferase from Spodoptera frugiperda (Fall armyworm).